We begin with the raw amino-acid sequence, 364 residues long: Fructose-1,6-bisphosphatase class 1 2 (364 aa).

Mg(2+) is bound by residues glutamate 101, aspartate 123, leucine 125, and aspartate 126. Residues 126-129 (DGSS) and asparagine 218 contribute to the substrate site. Glutamate 290 is a binding site for Mg(2+).

The protein belongs to the FBPase class 1 family. Homotetramer. Requires Mg(2+) as cofactor.

Its subcellular location is the cytoplasm. The catalysed reaction is beta-D-fructose 1,6-bisphosphate + H2O = beta-D-fructose 6-phosphate + phosphate. Its pathway is carbohydrate biosynthesis; gluconeogenesis. The chain is Fructose-1,6-bisphosphatase class 1 2 from Cupriavidus taiwanensis (strain DSM 17343 / BCRC 17206 / CCUG 44338 / CIP 107171 / LMG 19424 / R1) (Ralstonia taiwanensis (strain LMG 19424)).